The primary structure comprises 1025 residues: Synapsin (1025 aa).

4 disordered regions span residues 1-94 (MKRG…SRES), 439-784 (VCRP…NYGS), 872-910 (YDSN…KHSD), and 995-1025 (DFSD…LDLK). Pro residues predominate over residues 34–52 (TKPPVAGGPPNMPPPPAPG). The span at 454–463 (SRSSVSSRAE) shows a compositional bias: low complexity. Residues 472 to 492 (PTPPLPAGPRPAPMGGPPPIP) are compositionally biased toward pro residues. 2 stretches are compositionally biased toward low complexity: residues 499 to 546 (VGSI…SSVS) and 594 to 626 (SETS…QFSF). Serine 539 is modified (phosphoserine). The segment covering 651–673 (TTASSAVRPESSVSVSDSRNTDT) has biased composition (polar residues). The segment covering 690–702 (QQERVNPFDKEPS) has biased composition (basic and acidic residues). Residues 703 to 725 (KSGSAASIHTSSSSSISSSSISS) show a composition bias toward low complexity. Positions 726-735 (RINRNGNAIQ) are enriched in polar residues. Pro residues predominate over residues 736-749 (SPPPPAGPPPPPPT). The span at 750-759 (NVTAVGSNAN) shows a compositional bias: polar residues. The segment covering 760 to 772 (SSSGYRNSFSSSL) has biased composition (low complexity). Residues 872–904 (YDSNSIASQGEGLNNPSDLPSYTRPSYSRSESN) are compositionally biased toward polar residues. The segment covering 995–1007 (DFSDSGSMSSIGS) has biased composition (low complexity).

Belongs to the synapsin family. In terms of assembly, identified in a complex with Syt1 and nwk. As to expression, widely expressed in the embryonic and adult nervous system synaptic terminals.

It localises to the synapse. In terms of biological role, plays a significant role in nervous system function, which is subtle at the cellular level but manifests itself in complex behavior. The sequence is that of Synapsin (Syn) from Drosophila melanogaster (Fruit fly).